Reading from the N-terminus, the 509-residue chain is Monocarboxylate transporter 9 (509 aa).

Over 1-12 (MELKKSPDGGWG) the chain is Cytoplasmic. A run of 12 helical transmembrane segments spans residues 13–33 (WVIV…PLAV), 53–73 (WVGS…SLCV), 80–100 (PVTI…SFAP), 102–122 (IYFL…LLYT), 137–157 (GLAL…YAAL), 164–184 (FYGL…ILAC), 305–325 (VFSA…PPSL), 342–362 (IMPL…LLGI), 372–392 (LYLY…IPFA), 398–418 (LALL…FPYV), 433–453 (GILM…VGWF), and 462–482 (IAFY…LLAA). Topologically, residues 483 to 509 (LPSWDTCNKQLPKPAPTTFLYKVASNV) are cytoplasmic.

This sequence belongs to the major facilitator superfamily. Monocarboxylate porter (TC 2.A.1.13) family.

Its subcellular location is the cell membrane. It carries out the reaction creatine(in) = creatine(out). It catalyses the reaction (R)-carnitine(in) = (R)-carnitine(out). Extracellular pH-and Na(+)-sensitive low-affinity creatine transporter. Also functions as a pH-independent carnitine efflux transporter. This Pongo abelii (Sumatran orangutan) protein is Monocarboxylate transporter 9 (SLC16A9).